The sequence spans 4655 residues: Low-density lipoprotein receptor-related protein 2 (4655 aa).

An N-terminal signal peptide occupies residues 1-25; it reads MDRGPAAVACTLLLALVACLAPASG. The Extracellular segment spans residues 26–4423; sequence QECDSAHFRC…FSKGISPGTT (4398 aa). LDL-receptor class A domains lie at 27 to 63, 66 to 104, 107 to 143, 146 to 180, 182 to 218, 221 to 257, and 265 to 308; these read ECDS…IGCA, TCQQ…QDCS, TCSS…NDCQ, TCEQ…INCT, ICLH…HACN, TCGG…DGCE, and KCSP…KYCS. 21 disulfides stabilise this stretch: Cys-28-Cys-40, Cys-35-Cys-53, Cys-47-Cys-62, Cys-67-Cys-80, Cys-74-Cys-93, Cys-87-Cys-103, Cys-108-Cys-120, Cys-115-Cys-133, Cys-127-Cys-142, Cys-147-Cys-157, Cys-152-Cys-170, Cys-164-Cys-179, Cys-183-Cys-195, Cys-190-Cys-208, Cys-202-Cys-217, Cys-222-Cys-234, Cys-229-Cys-247, Cys-241-Cys-256, Cys-266-Cys-279, Cys-273-Cys-292, and Cys-286-Cys-307. N-linked (GlcNAc...) asparagine glycans are attached at residues Asn-159 and Asn-178. N-linked (GlcNAc...) asparagine glycosylation is found at Asn-299, Asn-300, Asn-341, Asn-388, and Asn-463. LDL-receptor class B repeat units follow at residues 436 to 478, 479 to 521, 522 to 568, 569 to 613, 753 to 795, 796 to 837, 838 to 881, and 882 to 925; these read QRVF…DWVN, NKIY…DPTV, GYLF…DMIS, KRVY…FEGQ, STIF…DWIS, KNLY…HPFA, GYLF…DWAA, and SRLY…FGEH. Asn-866 is a glycosylation site (N-linked (GlcNAc...) asparagine). The 37-residue stretch at 1025-1061 folds into the LDL-receptor class A 8 domain; sequence QCGLFSFPCKNGRCVPNYYLCDGVDDCHDNSDEQLCG. Intrachain disulfides connect Cys-1026–Cys-1038, Cys-1033–Cys-1051, and Cys-1045–Cys-1060. Asn-1064 carries N-linked (GlcNAc...) asparagine glycosylation. 7 LDL-receptor class A domains span residues 1066-1102, 1108-1144, 1148-1184, 1186-1223, 1229-1267, 1270-1306, and 1304-1349; these read TCSS…HNCP, SCLD…KNCN, TCQP…VGCV, NCTA…AGCP, MCHS…NACV, TCPS…KDCP, and DCPT…PLCN. 6 disulfide bridges follow: Cys-1067/Cys-1079, Cys-1074/Cys-1092, Cys-1086/Cys-1101, Cys-1109/Cys-1121, Cys-1116/Cys-1134, and Cys-1128/Cys-1143. Ca(2+) is bound by residues Trp-1126, Asp-1129, Asp-1131, Asp-1133, Asp-1139, and Glu-1140. An N-linked (GlcNAc...) asparagine glycan is attached at Asn-1144. Cystine bridges form between Cys-1149–Cys-1161, Cys-1156–Cys-1174, and Cys-1168–Cys-1183. An N-linked (GlcNAc...) asparagine glycan is attached at Asn-1186. Disulfide bonds link Cys-1187–Cys-1200, Cys-1194–Cys-1213, Cys-1207–Cys-1222, Cys-1230–Cys-1243, Cys-1237–Cys-1256, Cys-1250–Cys-1266, Cys-1271–Cys-1283, Cys-1278–Cys-1296, Cys-1290–Cys-1305, Cys-1305–Cys-1325, Cys-1312–Cys-1338, and Cys-1332–Cys-1348. Ca(2+) contacts are provided by Asp-1208, Val-1210, Asp-1212, Asp-1218, and Glu-1219. N-linked (GlcNAc...) asparagine glycosylation is found at Asn-1327, Asn-1340, and Asn-1383. An EGF-like 1; calcium-binding domain is found at 1390 to 1429; it reads DIDECDILGSCSQHCYNMRGSFRCSCDTGYMLESDGRTCK. Intrachain disulfides connect Cys-1394/Cys-1404, Cys-1400/Cys-1413, and Cys-1415/Cys-1428. N-linked (GlcNAc...) asparagine glycans are attached at residues Asn-1464, Asn-1496, and Asn-1550. LDL-receptor class B repeat units follow at residues 1478–1520, 1521–1563, 1566–1609, 1610–1654, and 1655–1695; these read GRIF…DWVG, RNLY…DPRM, HLLF…DYPN, RLLY…FEDS, and VYWT…VHPS. Asn-1675 carries N-linked (GlcNAc...) asparagine glycosylation. The EGF-like 2 domain occupies 1700 to 1741; the sequence is SVNPCAFSRCSHLCLLSSQGPHFYSCVCPSGWSLSPDLLNCL. 3 cysteine pairs are disulfide-bonded: Cys-1704–Cys-1713, Cys-1709–Cys-1725, and Cys-1727–Cys-1740. LDL-receptor class B repeat units lie at residues 1790-1832, 1833-1882, 1883-1930, 1931-1972, and 1973-2013; these read QYIY…DWIS, RNLY…DPAR, GKLY…DIEE, QKLY…HDSF, and LYYT…YHRR. An N-linked (GlcNAc...) asparagine glycan is attached at Asn-1810. Asn-2055 carries an N-linked (GlcNAc...) asparagine glycan. 9 LDL-receptor class B repeats span residues 2107-2156, 2157-2201, 2202-2245, 2246-2289, 2431-2477, 2478-2518, 2519-2562, 2563-2604, and 2605-2646; these read GFIY…DWVA, GNLY…DPKN, RYLF…DRSD, GYVY…FENS, DRIY…DWIT, RRIY…DPCQ, GYLY…DYEE, DLLY…YGQY, and IYWT…VVKN. N-linked (GlcNAc...) asparagine glycans are attached at residues Asn-2177 and Asn-2224. 2 N-linked (GlcNAc...) asparagine glycosylation sites follow: Asn-2499 and Asn-2547. LDL-receptor class A domains lie at 2699–2737, 2740–2776, 2779–2818, 2821–2860, 2863–2900, 2905–2944, 2947–2989, 2992–3028, 3031–3069, and 3074–3110; these read RCGA…SVCA, TCSP…AGCL, DCNA…KNCP, TCQS…TYCT, TCSS…ASCG, TCLA…HQCQ, NCSD…QNCT, TCSE…RGCL, TCQQ…HLCH, and TCPP…KGCG. 18 disulfide bridges follow: Cys-2700–Cys-2712, Cys-2707–Cys-2725, Cys-2719–Cys-2736, Cys-2741–Cys-2753, Cys-2748–Cys-2766, Cys-2760–Cys-2775, Cys-2780–Cys-2793, Cys-2788–Cys-2806, Cys-2800–Cys-2817, Cys-2822–Cys-2835, Cys-2829–Cys-2848, Cys-2842–Cys-2859, Cys-2864–Cys-2876, Cys-2871–Cys-2889, Cys-2883–Cys-2899, Cys-2906–Cys-2918, Cys-2913–Cys-2931, and Cys-2925–Cys-2943. An N-linked (GlcNAc...) asparagine glycan is attached at Asn-2781. Asn-2809 and Asn-2810 each carry an N-linked (GlcNAc...) asparagine glycan. N-linked (GlcNAc...) asparagine glycosylation is present at Asn-2947. 18 cysteine pairs are disulfide-bonded: Cys-2948–Cys-2965, Cys-2955–Cys-2978, Cys-2972–Cys-2988, Cys-2993–Cys-3005, Cys-3000–Cys-3018, Cys-3012–Cys-3027, Cys-3032–Cys-3044, Cys-3039–Cys-3057, Cys-3051–Cys-3068, Cys-3075–Cys-3087, Cys-3082–Cys-3100, Cys-3094–Cys-3109, Cys-3114–Cys-3126, Cys-3122–Cys-3135, Cys-3137–Cys-3150, Cys-3156–Cys-3167, Cys-3163–Cys-3176, and Cys-3178–Cys-3191. Asn-2987 carries an N-linked (GlcNAc...) asparagine glycan. The region spanning 3110–3151 is the EGF-like 3 domain; that stretch reads GINECHDPSISGCDHNCTDTLTSFYCSCRPGYKLMSDKRTCV. Residue Asn-3125 is glycosylated (N-linked (GlcNAc...) asparagine). The region spanning 3152–3192 is the EGF-like 4; calcium-binding domain; the sequence is DIDECTEMPFVCSQKCENVIGSYICKCAPGYLREPDGKTCR. N-linked (GlcNAc...) asparagine glycosylation is found at Asn-3211, Asn-3257, Asn-3315, and Asn-3355. LDL-receptor class B repeat units follow at residues 3239-3281, 3282-3324, 3333-3376, 3377-3419, and 3420-3460; these read KRLY…DWVS, RKLY…DNPR, GYLY…DYTN, DLLY…FEDT, and IYWT…YHPY. Asn-3446 is a glycosylation site (N-linked (GlcNAc...) asparagine). 11 LDL-receptor class A domains span residues 3511–3549, 3552–3590, 3593–3631, 3634–3672, 3677–3715, 3718–3755, 3758–3794, 3797–3833, 3841–3879, 3882–3921, and 3927–3963; these read MCSS…ALCP, FCRL…LLCE, HCDS…SHCA, TCRP…EECM, LCDN…QGCE, TCHP…ENCA, ECTE…RDCE, TCHP…ADCP, YCQA…HLCL, PCNS…EHCR, and PCTE…LGCN. Cystine bridges form between Cys-3512-Cys-3525, Cys-3519-Cys-3538, Cys-3532-Cys-3548, Cys-3553-Cys-3565, Cys-3560-Cys-3578, Cys-3572-Cys-3589, Cys-3594-Cys-3606, Cys-3601-Cys-3619, Cys-3613-Cys-3630, Cys-3635-Cys-3647, Cys-3642-Cys-3660, Cys-3654-Cys-3671, Cys-3678-Cys-3692, Cys-3686-Cys-3705, Cys-3699-Cys-3714, Cys-3719-Cys-3732, Cys-3727-Cys-3745, Cys-3739-Cys-3754, Cys-3759-Cys-3771, Cys-3766-Cys-3784, Cys-3778-Cys-3793, Cys-3798-Cys-3810, Cys-3805-Cys-3823, Cys-3817-Cys-3832, Cys-3842-Cys-3854, Cys-3849-Cys-3867, Cys-3861-Cys-3878, Cys-3883-Cys-3896, Cys-3891-Cys-3909, Cys-3903-Cys-3920, Cys-3928-Cys-3940, Cys-3935-Cys-3953, and Cys-3947-Cys-3962. An N-linked (GlcNAc...) asparagine glycan is attached at Asn-3564. A glycan (N-linked (GlcNAc...) asparagine) is linked at Asn-3680. Residue Asn-3978 is glycosylated (N-linked (GlcNAc...) asparagine). An EGF-like 5; calcium-binding domain is found at 4007–4048; sequence DINECEQFGTCPQHCRNTKGSYECVCADGFTSMSDRPGKRCA. 3 disulfide bridges follow: Cys-4011-Cys-4021, Cys-4017-Cys-4030, and Cys-4032-Cys-4047. Asn-4068 carries N-linked (GlcNAc...) asparagine glycosylation. 3 LDL-receptor class B repeats span residues 4154 to 4196, 4197 to 4240, and 4242 to 4283; these read RHIY…NPKL, GLMF…DYLN, and DRIY…FEDQ. N-linked (GlcNAc...) asparagine glycosylation occurs at Asn-4327. The region spanning 4377–4411 is the EGF-like 6 domain; the sequence is LPPPCRCMHGGNCYFDETDLPKCKCPSGYTGKYCE. 3 disulfides stabilise this stretch: Cys-4381–Cys-4389, Cys-4383–Cys-4399, and Cys-4401–Cys-4410. The chain crosses the membrane as a helical span at residues 4424–4446; sequence AVAVLLTILLIVVIGALAIAGFF. Over 4447–4655 the chain is Cytoplasmic; the sequence is HYRRTGSLLP…ANLVKEDSEV (209 aa). Positions 4453-4462 match the SH3-binding motif; the sequence is SLLPALPKLP. The short motif at 4456–4461 is the PxLPxI/L motif 1; mediates interaction with ANKRA2 element; sequence PALPKL. The short motif at 4459 to 4464 is the PxLPxI/L motif 2; mediates interaction with ANKRA2 element; sequence PKLPSL. 2 positions are modified to phosphoserine: Ser-4463 and Ser-4466. Residues 4521–4526 carry the Endocytosis signal motif; that stretch reads FENPMY. Residues 4550 to 4574 form a disordered region; that stretch reads KNYGSPINPSEIVPETNPTSPAADG. Residues 4565–4574 are compositionally biased toward polar residues; the sequence is TNPTSPAADG. A Phosphoserine modification is found at Ser-4569. Residues 4589–4602 form an interaction with DAB2 region; it reads QTTNFENPIYAQME. The NPXY motif signature appears at 4595–4598; sequence NPIY. The SH2-binding motif lies at 4598 to 4601; it reads YAQM. The segment at 4601 to 4655 is disordered; that stretch reads MENEQKESVAATPPPSPSLPAKPKPPSRRDPTPTYSATEDTFKDTANLVKEDSEV. The SH3-binding motif lies at 4611–4622; it reads ATPPPSPSLPAK. A compositionally biased stretch (pro residues) spans 4612–4624; that stretch reads TPPPSPSLPAKPK. At Ser-4616 the chain carries Phosphoserine. Thr-4632 is modified (phosphothreonine). Phosphoserine is present on Ser-4653.

The protein belongs to the LDLR family. In terms of assembly, binds plasminogen, extracellular matrix components, plasminogen activator-plasminogen activator inhibitor type I complex, apolipoprotein E-enriched beta-VLDL, lipoprotein lipase, lactoferrin, CLU/clusterin and calcium. Forms a multimeric complex together with LRPAP1. Interacts (via PxLPxI/L motif) with ANKRA2 (via ankyrin repeats). Interacts with LRP2BP. Interacts (via NPXY motif) with DAB2; the interaction is not affected by tyrosine phosphorylation of the NPXY motif. Interacts with MB. Interacts with BMP4. Interacts with the Sonic hedgehog protein N-product which is the active product of SHH. Interacts with CST3 in a calcium-dependent manner. Interacts with the vitamin-D binding protein GC/DBP. Interacts with sex hormone-binding protein SHBG. Interacts with angiotensin-2. Also interacts with angiotensin 1-7. Interacts with APOM. Interacts with selenoprotein SEPP1. Interacts with LEP. Interacts with ALB. Interacts with the antiapoptotic protein BIRC5/survivin. Interacts with matrix metalloproteinase MMP2 in complex with metalloproteinase inhibitor TIMP1. In neurons, forms a trimeric complex with APP and APPB1/FE65. Interacts with LDLRAP1/ARH; mediates trafficking of LRP2 to the endocytic recycling compartment. Does not interact with beta-amyloid protein 40 alone but interacts with the complex composed of beta-amyloid protein 40 and CLU/APOJ. Interacts with MDK. A fraction undergoes proteolytic cleavage of the extracellular domain at the cell membrane to generate a cytoplasmic tail fragment. This is internalized into the early endosome from where it trafficks in an LDLRAP1/ARH-dependent manner to the endocytic recycling compartment (ERC). In the ERC, it is further cleaved by gamma-secretase to release a fragment which translocates to the nucleus and mediates transcriptional repression. Post-translationally, N-glycosylation is required for ligand binding. Expressed in first and third trimester cytotrophoblasts in the placenta (at protein level). Absorptive epithelia, including renal proximal tubules.

The protein resides in the apical cell membrane. It is found in the endosome lumen. Its subcellular location is the membrane. The protein localises to the coated pit. It localises to the cell projection. The protein resides in the dendrite. It is found in the axon. Functionally, multiligand endocytic receptor. Acts together with CUBN to mediate endocytosis of high-density lipoproteins. Mediates receptor-mediated uptake of polybasic drugs such as aprotinin, aminoglycosides and polymyxin B. In the kidney, mediates the tubular uptake and clearance of leptin. Also mediates transport of leptin across the blood-brain barrier through endocytosis at the choroid plexus epithelium. Endocytosis of leptin in neuronal cells is required for hypothalamic leptin signaling and leptin-mediated regulation of feeding and body weight. Mediates endocytosis and subsequent lysosomal degradation of CST3 in kidney proximal tubule cells. Mediates renal uptake of 25-hydroxyvitamin D3 in complex with the vitamin D3 transporter GC/DBP. Mediates renal uptake of metallothionein-bound heavy metals. Together with CUBN, mediates renal reabsorption of myoglobin. Mediates renal uptake and subsequent lysosomal degradation of APOM. Plays a role in kidney selenium homeostasis by mediating renal endocytosis of selenoprotein SEPP1. Mediates renal uptake of the antiapoptotic protein BIRC5/survivin which may be important for functional integrity of the kidney. Mediates renal uptake of matrix metalloproteinase MMP2 in complex with metalloproteinase inhibitor TIMP1. Mediates endocytosis of Sonic hedgehog protein N-product (ShhN), the active product of SHH. Also mediates ShhN transcytosis. In the embryonic neuroepithelium, mediates endocytic uptake and degradation of BMP4, is required for correct SHH localization in the ventral neural tube and plays a role in patterning of the ventral telencephalon. Required at the onset of neurulation to sequester SHH on the apical surface of neuroepithelial cells of the rostral diencephalon ventral midline and to control PTCH1-dependent uptake and intracellular trafficking of SHH. During neurulation, required in neuroepithelial cells for uptake of folate bound to the folate receptor FOLR1 which is necessary for neural tube closure. In the adult brain, negatively regulates BMP signaling in the subependymal zone which enables neurogenesis to proceed. In astrocytes, mediates endocytosis of ALB which is required for the synthesis of the neurotrophic factor oleic acid. Involved in neurite branching. During optic nerve development, required for SHH-mediated migration and proliferation of oligodendrocyte precursor cells. Mediates endocytic uptake and clearance of SHH in the retinal margin which protects retinal progenitor cells from mitogenic stimuli and keeps them quiescent. Plays a role in reproductive organ development by mediating uptake in reproductive tissues of androgen and estrogen bound to the sex hormone binding protein SHBG. Mediates endocytosis of angiotensin-2. Also mediates endocytosis of angiotensis 1-7. Binds to the complex composed of beta-amyloid protein 40 and CLU/APOJ and mediates its endocytosis and lysosomal degradation. Required for embryonic heart development. Required for normal hearing, possibly through interaction with estrogen in the inner ear. This Homo sapiens (Human) protein is Low-density lipoprotein receptor-related protein 2.